We begin with the raw amino-acid sequence, 460 residues long: MATGKIIQVIGAVVDVEFPQDAVPKVYNALEVEGTTEKLVLEVQQQLGGGVVRCIAMGSSDGLSRGLKVTNLEHPIEVPVGKATLGRIMNVLGEPIDMKGPIGEEERWAIHREAPSYEELASSQDLLETGIKVMDLICPFAKGGKVGLFGGAGVGKTVNMMELIRNIAIEHSGYSVFAGVGERTREGNDFYHEMTDSNVLDKVSLVYGQMNEPPGNRLRVALTGLTMAEKFRDEGRDVLLFIDNIYRYTLAGTEVSALLGRMPSAVGYQPTLAEEMGVLQERITSTKTGSITSVQAVYVPADDLTDPSPATTFAHLDATVVLSRQIASLGIYPAVDPLDSTSRQLDPLVVGQEHYDVARGVQSILQRYQELKDIIAILGMDELSEDDKLVVSRARKIQRFLSQPFFVAEVFTGSPGKFVSLKDTIRGFKGIMNGDYDHLPEQAFYMVGTIEEAVEKAKKL.

Residue 150–157 participates in ATP binding; it reads GGAGVGKT.

This sequence belongs to the ATPase alpha/beta chains family. In terms of assembly, F-type ATPases have 2 components, CF(1) - the catalytic core - and CF(0) - the membrane proton channel. CF(1) has five subunits: alpha(3), beta(3), gamma(1), delta(1), epsilon(1). CF(0) has three main subunits: a(1), b(2) and c(9-12). The alpha and beta chains form an alternating ring which encloses part of the gamma chain. CF(1) is attached to CF(0) by a central stalk formed by the gamma and epsilon chains, while a peripheral stalk is formed by the delta and b chains.

It localises to the cell inner membrane. It carries out the reaction ATP + H2O + 4 H(+)(in) = ADP + phosphate + 5 H(+)(out). In terms of biological role, produces ATP from ADP in the presence of a proton gradient across the membrane. The catalytic sites are hosted primarily by the beta subunits. The protein is ATP synthase subunit beta of Yersinia pestis bv. Antiqua (strain Angola).